Here is a 162-residue protein sequence, read N- to C-terminus: NADH-quinone oxidoreductase subunit I (162 aa).

2 4Fe-4S ferredoxin-type domains span residues 53-83 (LRRY…IEAE) and 93-122 (TRYD…EGPN). Residues C63, C66, C69, C73, C102, C105, C108, and C112 each contribute to the [4Fe-4S] cluster site.

Belongs to the complex I 23 kDa subunit family. In terms of assembly, NDH-1 is composed of 14 different subunits. Subunits NuoA, H, J, K, L, M, N constitute the membrane sector of the complex. Requires [4Fe-4S] cluster as cofactor.

It is found in the cell inner membrane. The enzyme catalyses a quinone + NADH + 5 H(+)(in) = a quinol + NAD(+) + 4 H(+)(out). Functionally, NDH-1 shuttles electrons from NADH, via FMN and iron-sulfur (Fe-S) centers, to quinones in the respiratory chain. The immediate electron acceptor for the enzyme in this species is believed to be ubiquinone. Couples the redox reaction to proton translocation (for every two electrons transferred, four hydrogen ions are translocated across the cytoplasmic membrane), and thus conserves the redox energy in a proton gradient. This chain is NADH-quinone oxidoreductase subunit I, found in Maricaulis maris (strain MCS10) (Caulobacter maris).